The primary structure comprises 137 residues: Putative pre-16S rRNA nuclease (137 aa).

It belongs to the YqgF nuclease family.

It localises to the cytoplasm. Could be a nuclease involved in processing of the 5'-end of pre-16S rRNA. This is Putative pre-16S rRNA nuclease from Chromobacterium violaceum (strain ATCC 12472 / DSM 30191 / JCM 1249 / CCUG 213 / NBRC 12614 / NCIMB 9131 / NCTC 9757 / MK).